A 247-amino-acid polypeptide reads, in one-letter code: Golgi-associated RAB2 interactor protein 5A (247 aa).

The segment covering 1–16 (MGPPLWPDLQEPPPPG) has biased composition (pro residues). 2 disordered regions span residues 1–22 (MGPP…SQIR) and 60–92 (GDIA…PTGR).

This sequence belongs to the GARIN family. In terms of assembly, interacts (via N-terminus) with RAB2B (in GTP-bound form).

Its subcellular location is the golgi apparatus. Functionally, RAB2B effector protein which promotes cytosolic DNA-induced innate immune responses. Regulates IFN responses against DNA viruses by regulating the CGAS-STING signaling axis. The sequence is that of Golgi-associated RAB2 interactor protein 5A from Homo sapiens (Human).